We begin with the raw amino-acid sequence, 342 residues long: MTYTLLRPLLFLLDAETAHTLTLDTLGLLQKTGLLPNRTIYCTPVRAMGLDFPNPVGLAAGLDKNGAYISALARLGFGFIEVGTVTPRPQPGNPRPRLFRVPQAEAITNRMGFNNVGIDKLIENVRQADYQGILGINIGKNADTPLQNAIDDYLICLRKAYPYASYVTVNISSPNTKQLRQLQNETELEQLLGALKTEQTRLSDQHGHYTPLAIKIAPDLESAQIEAIASLLLKHRMDAVIATNTTIARDGLEHLPHGDEPGGLSGAPLTERSTAVIRQLAMHLQQAIPIIGAGGIMSSLDAQAKIKAGASLVQVYSGLIYRGPALVSEITSLLCSRSTYAG.

Residues 60–64 (AGLDK) and Thr84 contribute to the FMN site. Residue Lys64 coordinates substrate. 109–113 (NRMGF) is a binding site for substrate. Residues Asn137 and Asn170 each coordinate FMN. Residue Asn170 participates in substrate binding. Ser173 serves as the catalytic Nucleophile. Residue Asn175 coordinates substrate. 2 residues coordinate FMN: Lys215 and Thr243. 244–245 (NT) is a substrate binding site. Residues Gly266, Gly295, and 316–317 (YS) each bind FMN.

Belongs to the dihydroorotate dehydrogenase family. Type 2 subfamily. As to quaternary structure, monomer. FMN is required as a cofactor.

The protein localises to the cell membrane. The catalysed reaction is (S)-dihydroorotate + a quinone = orotate + a quinol. It functions in the pathway pyrimidine metabolism; UMP biosynthesis via de novo pathway; orotate from (S)-dihydroorotate (quinone route): step 1/1. In terms of biological role, catalyzes the conversion of dihydroorotate to orotate with quinone as electron acceptor. The polypeptide is Dihydroorotate dehydrogenase (quinone) (Nitrosomonas eutropha (strain DSM 101675 / C91 / Nm57)).